A 284-amino-acid polypeptide reads, in one-letter code: Probable endonuclease 4 (284 aa).

Residues His69, His109, Glu145, Asp179, His182, His216, Asp229, His231, and Glu261 each contribute to the Zn(2+) site.

The protein belongs to the AP endonuclease 2 family. Zn(2+) is required as a cofactor.

The enzyme catalyses Endonucleolytic cleavage to 5'-phosphooligonucleotide end-products.. Endonuclease IV plays a role in DNA repair. It cleaves phosphodiester bonds at apurinic or apyrimidinic (AP) sites, generating a 3'-hydroxyl group and a 5'-terminal sugar phosphate. This chain is Probable endonuclease 4, found in Klebsiella pneumoniae (strain 342).